A 149-amino-acid chain; its full sequence is Probable microsomal glutathione S-transferase (149 aa).

2 helical membrane passes run 7 to 27 and 123 to 143; these read SIFP…IGLW and LSHI…GSSL.

Belongs to the MAPEG family.

The protein resides in the membrane. The enzyme catalyses RX + glutathione = an S-substituted glutathione + a halide anion + H(+). In terms of biological role, may perform the conjugation of reduced glutathione to electrophiles. In Dictyostelium discoideum (Social amoeba), this protein is Probable microsomal glutathione S-transferase (mgst).